A 447-amino-acid polypeptide reads, in one-letter code: Gamma-glutamyl phosphate reductase (447 aa).

Belongs to the gamma-glutamyl phosphate reductase family.

Its subcellular location is the cytoplasm. The enzyme catalyses L-glutamate 5-semialdehyde + phosphate + NADP(+) = L-glutamyl 5-phosphate + NADPH + H(+). It functions in the pathway amino-acid biosynthesis; L-proline biosynthesis; L-glutamate 5-semialdehyde from L-glutamate: step 2/2. In terms of biological role, catalyzes the NADPH-dependent reduction of L-glutamate 5-phosphate into L-glutamate 5-semialdehyde and phosphate. The product spontaneously undergoes cyclization to form 1-pyrroline-5-carboxylate. This chain is Gamma-glutamyl phosphate reductase, found in Methanosarcina acetivorans (strain ATCC 35395 / DSM 2834 / JCM 12185 / C2A).